The sequence spans 259 residues: Deoxyribose-phosphate aldolase (259 aa).

Catalysis depends on Asp102, which acts as the Proton donor/acceptor. Lys167 acts as the Schiff-base intermediate with acetaldehyde in catalysis. The active-site Proton donor/acceptor is the Lys201.

It belongs to the DeoC/FbaB aldolase family. DeoC type 2 subfamily.

It is found in the cytoplasm. It catalyses the reaction 2-deoxy-D-ribose 5-phosphate = D-glyceraldehyde 3-phosphate + acetaldehyde. The protein operates within carbohydrate degradation; 2-deoxy-D-ribose 1-phosphate degradation; D-glyceraldehyde 3-phosphate and acetaldehyde from 2-deoxy-alpha-D-ribose 1-phosphate: step 2/2. Functionally, catalyzes a reversible aldol reaction between acetaldehyde and D-glyceraldehyde 3-phosphate to generate 2-deoxy-D-ribose 5-phosphate. This chain is Deoxyribose-phosphate aldolase, found in Enterobacter sp. (strain 638).